The primary structure comprises 461 residues: Aspartic proteinase NANA, chloroplast (461 aa).

Asn-86 is a glycosylation site (N-linked (GlcNAc...) asparagine). In terms of domain architecture, Peptidase A1 spans 106 to 456 (YFTEIRVGTP…DLMASTLSFA (351 aa)). The active site involves Asp-124. An N-linked (GlcNAc...) asparagine glycan is attached at Asn-274. Asp-338 is an active-site residue. The N-linked (GlcNAc...) asparagine glycan is linked to Asn-386.

The protein belongs to the peptidase A1 family.

It localises to the plastid. It is found in the chloroplast. Its activity is regulated as follows. Repressed by pepstatin A. Functionally, aspartic proteinase that can use azocasein as substrate and regulates endogenous sugar levels (e.g. sucrose, glucose and fructose) by modulating starch accumulation and remobilization. Influences general morphology and development. In Arabidopsis thaliana (Mouse-ear cress), this protein is Aspartic proteinase NANA, chloroplast.